We begin with the raw amino-acid sequence, 343 residues long: L-threonine 3-dehydrogenase (343 aa).

Cys38 contacts Zn(2+). Residues Thr40 and His43 each act as charge relay system in the active site. Zn(2+)-binding residues include His63, Glu64, Cys93, Cys96, Cys99, and Cys107. Residues Ile176, Asp196, Arg201, Leu261–Ile263, and Ile286–Gly288 each bind NAD(+).

The protein belongs to the zinc-containing alcohol dehydrogenase family. In terms of assembly, homotetramer. Zn(2+) is required as a cofactor.

Its subcellular location is the cytoplasm. It catalyses the reaction L-threonine + NAD(+) = (2S)-2-amino-3-oxobutanoate + NADH + H(+). It participates in amino-acid degradation; L-threonine degradation via oxydo-reductase pathway; glycine from L-threonine: step 1/2. Its function is as follows. Catalyzes the NAD(+)-dependent oxidation of L-threonine to 2-amino-3-ketobutyrate. The chain is L-threonine 3-dehydrogenase from Thermus thermophilus (strain ATCC 27634 / DSM 579 / HB8).